The primary structure comprises 61 residues: UPF0181 protein Ent638_2380 (61 aa).

The protein belongs to the UPF0181 family.

This chain is UPF0181 protein Ent638_2380, found in Enterobacter sp. (strain 638).